A 308-amino-acid polypeptide reads, in one-letter code: MNNNELIEKINKLRKEKNAIILAHYYQRPEIQDIADFIGDSLELSRIAQKSDADIIVFCGVRFMAETAKILNPTKKVLHPNPESGCPMADMATLEGVKKLKQEHPDAVVVSYINTNADVKTVSDVIVTSRNAVKVVKSLDAKKIIFVPDQFLGSYIARQVPEKEFILWKGFCPPHFNLSKETLLELKQRYPEAKIAVHPECNTDTVEIADFVGSTTQIIEYATTCDADTVIIGTEVGILHALKKKNPNKNYVFPQSADYCGTVHCCDMKKNTLDKVLEVLEKETNEIILPSEIIQKAVIPLERMLAVA.

His24 and Ser41 together coordinate iminosuccinate. Cys86 lines the [4Fe-4S] cluster pocket. Residues 112 to 114 and Ser129 contribute to the iminosuccinate site; that span reads YIN. Cys172 serves as a coordination point for [4Fe-4S] cluster. Iminosuccinate is bound by residues 198–200 and Thr215; that span reads HPE. [4Fe-4S] cluster is bound at residue Cys265.

This sequence belongs to the quinolinate synthase family. Type 2 subfamily. It depends on [4Fe-4S] cluster as a cofactor.

The protein localises to the cytoplasm. It carries out the reaction iminosuccinate + dihydroxyacetone phosphate = quinolinate + phosphate + 2 H2O + H(+). The protein operates within cofactor biosynthesis; NAD(+) biosynthesis; quinolinate from iminoaspartate: step 1/1. Functionally, catalyzes the condensation of iminoaspartate with dihydroxyacetone phosphate to form quinolinate. In Sulfurihydrogenibium sp. (strain YO3AOP1), this protein is Quinolinate synthase.